A 64-amino-acid chain; its full sequence is Small ribosomal subunit protein bS21 (64 aa).

Residues 39–64 form a disordered region; it reads EKPSVKRKKKALAAKKRAVKKARKSF. The segment covering 43–64 has biased composition (basic residues); it reads VKRKKKALAAKKRAVKKARKSF.

The protein belongs to the bacterial ribosomal protein bS21 family.

This chain is Small ribosomal subunit protein bS21 (rpsU), found in Myxococcus xanthus.